A 112-amino-acid polypeptide reads, in one-letter code: Protein lin-52 homolog (112 aa).

This sequence belongs to the lin-52 family. In terms of assembly, component of the DREAM complex. As to expression, expressed in the brain, liver and retina. Highly expressed in the retinal ganglion cell and inner nuclear layers at the parr stage. Expressed at a lower level in inner segments of some retinal photoreceptors.

Functionally, may be involved in retinal development. This Oncorhynchus mykiss (Rainbow trout) protein is Protein lin-52 homolog (lin52).